Consider the following 197-residue polypeptide: GTP cyclohydrolase-2 (197 aa).

Residue arginine 50–glutamate 54 participates in GTP binding. Positions 55, 66, and 68 each coordinate Zn(2+). GTP is bound by residues glutamine 71, glutamate 93–arginine 95, and threonine 115. Aspartate 127 serves as the catalytic Proton acceptor. Arginine 129 acts as the Nucleophile in catalysis. Residues threonine 150 and lysine 155 each coordinate GTP.

This sequence belongs to the GTP cyclohydrolase II family. The cofactor is Zn(2+).

It carries out the reaction GTP + 4 H2O = 2,5-diamino-6-hydroxy-4-(5-phosphoribosylamino)-pyrimidine + formate + 2 phosphate + 3 H(+). It functions in the pathway cofactor biosynthesis; riboflavin biosynthesis; 5-amino-6-(D-ribitylamino)uracil from GTP: step 1/4. Catalyzes the conversion of GTP to 2,5-diamino-6-ribosylamino-4(3H)-pyrimidinone 5'-phosphate (DARP), formate and pyrophosphate. This chain is GTP cyclohydrolase-2, found in Neisseria gonorrhoeae (strain ATCC 700825 / FA 1090).